A 682-amino-acid chain; its full sequence is Nisin leader peptide-processing serine protease NisP (682 aa).

Residues 1 to 22 (MKKILGFLFIVCSLGLSATVHG) form the signal peptide. Positions 23–195 (ETTNSQQLLS…RKAKEVVSLR (173 aa)) are excised as a propeptide. A Peptidase S8 domain is found at 231 to 566 (QWDMKYVTNN…VDLLNGKNKA (336 aa)). Catalysis depends on charge relay system residues Asp259, His306, and Ser512. The LPXTG sorting signal motif lies at 652–656 (LPVTG). The residue at position 655 (Thr655) is a Pentaglycyl murein peptidoglycan amidated threonine. Positions 656–682 (GDGEDFLPALGIVCISILGILKRKTKN) are cleaved as a propeptide — removed by sortase.

It belongs to the peptidase S8 family.

It localises to the secreted. The protein resides in the cell wall. It functions in the pathway antibiotic biosynthesis; nisin biosynthesis. Functionally, cleaves the lantibiotic nisin precursor peptide. This Lactococcus lactis subsp. lactis (Streptococcus lactis) protein is Nisin leader peptide-processing serine protease NisP (nisP).